Here is a 169-residue protein sequence, read N- to C-terminus: Gametocyte-specific factor 1-like (169 aa).

CHHC U11-48K-type zinc fingers lie at residues 6 to 33 and 40 to 67; these read LETC…RRKN and MASC…VNKS. Residues Cys-9, His-15, His-25, Cys-29, Cys-43, His-49, His-59, and Cys-63 each contribute to the Zn(2+) site. Disordered regions lie at residues 67–103 and 131–169; these read STME…LPNP and SDTR…LLKA. Residues 131 to 158 are compositionally biased toward basic and acidic residues; the sequence is SDTRESETDDHNPIPDCPRRRSSDRESE.

It belongs to the UPF0224 (FAM112) family.

The polypeptide is Gametocyte-specific factor 1-like (GTSF1L) (Bos taurus (Bovine)).